The sequence spans 261 residues: uncharacterized protein (261 aa).

Positions 1-20 are cleaved as a signal peptide; that stretch reads MKIQVMLIIIFVGIFTICLA. N-linked (GlcNAc...) asparagine; by host glycosylation is found at Asn22 and Asn27.

It localises to the secreted. This is an uncharacterized protein from Acanthamoeba polyphaga (Amoeba).